Consider the following 563-residue polypeptide: UvrABC system protein C (563 aa).

The region spanning 12-87 (NKSGVYIFKK…IYKYKPKYNA (76 aa)) is the GIY-YIG domain. The region spanning 194–229 (SNVISFIKLKMEQHARLLDFENAAKYRDILLNFNKV) is the UVR domain.

The protein belongs to the UvrC family. As to quaternary structure, interacts with UvrB in an incision complex.

It is found in the cytoplasm. Functionally, the UvrABC repair system catalyzes the recognition and processing of DNA lesions. UvrC both incises the 5' and 3' sides of the lesion. The N-terminal half is responsible for the 3' incision and the C-terminal half is responsible for the 5' incision. The polypeptide is UvrABC system protein C (Fervidobacterium nodosum (strain ATCC 35602 / DSM 5306 / Rt17-B1)).